The chain runs to 519 residues: 2-isopropylmalate synthase (519 aa).

A Pyruvate carboxyltransferase domain is found at 5 to 267 (VVIFDTTLRD…STNINYKEIY (263 aa)). Mn(2+)-binding residues include Asp14, His202, His204, and Asn238. The regulatory domain stretch occupies residues 392-519 (SLKFFSVQSI…LKILKDFKKK (128 aa)).

The protein belongs to the alpha-IPM synthase/homocitrate synthase family. LeuA type 1 subfamily. As to quaternary structure, homodimer. The cofactor is Mn(2+).

Its subcellular location is the cytoplasm. It catalyses the reaction 3-methyl-2-oxobutanoate + acetyl-CoA + H2O = (2S)-2-isopropylmalate + CoA + H(+). It functions in the pathway amino-acid biosynthesis; L-leucine biosynthesis; L-leucine from 3-methyl-2-oxobutanoate: step 1/4. In terms of biological role, catalyzes the condensation of the acetyl group of acetyl-CoA with 3-methyl-2-oxobutanoate (2-ketoisovalerate) to form 3-carboxy-3-hydroxy-4-methylpentanoate (2-isopropylmalate). The protein is 2-isopropylmalate synthase of Buchnera aphidicola subsp. Acyrthosiphon pisum (strain APS) (Acyrthosiphon pisum symbiotic bacterium).